A 64-amino-acid polypeptide reads, in one-letter code: Defensin-like protein 41 (64 aa).

Positions 1 to 21 (MTQGKRKHPCDLKNPSKRAPP) are disordered. 4 cysteine pairs are disulfide-bonded: Cys10–Cys61, Cys24–Cys47, Cys33–Cys56, and Cys37–Cys58.

It belongs to the DEFL family.

The sequence is that of Defensin-like protein 41 from Arabidopsis thaliana (Mouse-ear cress).